The sequence spans 485 residues: Serine/threonine-protein kinase 4 (485 aa).

The Protein kinase domain occupies F30–I281. ATP is bound by residues L36–V44 and K59. Catalysis depends on D149, which acts as the Proton acceptor. At T183 the chain carries Phosphothreonine; by autocatalysis. The stretch at E287 to E313 forms a coiled coil. In terms of domain architecture, SARAH spans Y431–K478.

Belongs to the protein kinase superfamily. STE Ser/Thr protein kinase family. STE20 subfamily. As to quaternary structure, homodimer; mediated via the coiled-coil region. It depends on Mg(2+) as a cofactor. Autophosphorylated on Thr-183. Post-translationally, proteolytically cleaved by caspase-3 during apoptosis at Asp-326 resulting in a 37 kDa form. Proteolytic cleavage results in kinase activation and nuclear translocation of the truncated form (MST1/N).

It localises to the cytoplasm. It is found in the nucleus. It catalyses the reaction L-seryl-[protein] + ATP = O-phospho-L-seryl-[protein] + ADP + H(+). It carries out the reaction L-threonyl-[protein] + ATP = O-phospho-L-threonyl-[protein] + ADP + H(+). With respect to regulation, the C-terminal non-catalytic region inhibits the kinase activity, the enzyme is activated by caspase-cleavage. Homodimerization and autophosphorylation of Thr-183 is also required for full activation. In terms of biological role, stress-activated, pro-apoptotic kinase which, following caspase-cleavage, enters the nucleus and induces chromatin condensation followed by internucleosomal DNA fragmentation. Key component of the Hippo signaling pathway which plays a pivotal role in organ size control and tumor suppression by restricting proliferation and promoting apoptosis. The core of this pathway is composed of a kinase cascade wherein stk3/mst2 and stk4/mst1, in complex with its regulatory protein sav1, phosphorylates and activates lats1/2 in complex with its regulatory protein mob1, which in turn phosphorylates and inactivates yap1 oncoprotein and wwtr1/taz. Phosphorylation of yap1 by lats2 inhibits its translocation into the nucleus to regulate cellular genes important for cell proliferation, cell death, and cell migration. Phosphorylates 'Ser-14' of histone H2B (H2BS14ph) during apoptosis. The protein is Serine/threonine-protein kinase 4 (stk4) of Xenopus tropicalis (Western clawed frog).